The following is a 1073-amino-acid chain: Pleckstrin homology domain-containing family G member 5 (1073 aa).

5 disordered regions span residues 1–28, 91–135, 217–261, 278–309, and 367–388; these read MGTGPGVSGRRAAARPSSELPSPDSQLL, VSTR…ARRR, PGDE…ESSL, GEAGIPGHEPPAPSSCSLPVGSSGGTSSGINE, and SWEEEEEDDEEDEESSGLRLED. Composition is skewed to basic and acidic residues over residues 217-231 and 249-260; these read PGDEGKVEQGVKDSK and ERVDPQSRRESS. Acidic residues predominate over residues 367-381; sequence SWEEEEEDDEEDEES. One can recognise a DH domain in the interval 406 to 598; sequence HQQEAVWELL…ERFIHHVNTC (193 aa). The PH domain maps to 654–754; sequence QLLLEGSLRM…WVDTIYNAQN (101 aa). Disordered stretches follow at residues 762 to 818, 833 to 873, and 899 to 925; these read QLSA…TSDG, TLSS…GPVD, and PVVEPAPVPQTPSPQPSPRLRRRTPVQ. A compositionally biased stretch (acidic residues) spans 777–790; the sequence is LEEEEDEQEEEGEE. 2 stretches are compositionally biased toward polar residues: residues 791-809 and 844-864; these read SGTSAASSPTILRKSSNSL and VSSQSDESSLSNTASSVTPTS. Thr-793 carries the post-translational modification Phosphothreonine. A Phosphoserine modification is found at Ser-798. Residues 900-915 show a composition bias toward pro residues; sequence VVEPAPVPQTPSPQPS. At Thr-909 the chain carries Phosphothreonine. Residues Ser-911, Ser-936, and Ser-941 each carry the phosphoserine modification. Positions 993 to 1046 are disordered; it reads MCDPCHGPQLSESENRPSHMTGGPADSARRRCREMPSGTMSRVQSEPPSGVSAQ. Residues 1030 to 1039 show a composition bias toward polar residues; that stretch reads GTMSRVQSEP.

Interacts with GIPC1/synectin and RHOA. In terms of tissue distribution, expressed in neurons and glial cells of the peripheral nervous system, with highest levels of expression in the brain and sciatic nerve endoneurium. Isoform 2 is expressed at detectable levels only in malignant cells.

It is found in the cytoplasm. The protein localises to the perinuclear region. It localises to the cell membrane. The protein resides in the cell junction. Its subcellular location is the cell projection. It is found in the lamellipodium. Its function is as follows. Functions as a guanine exchange factor (GEF) for RAB26 and thus regulates autophagy of synaptic vesicles in axon terminal of motoneurons. Involved in the control of neuronal cell differentiation. Plays a role in angiogenesis through regulation of endothelial cells chemotaxis. Also affects the migration, adhesion, and matrix/bone degradation in macrophages and osteoclasts. This is Pleckstrin homology domain-containing family G member 5 (Plekhg5) from Mus musculus (Mouse).